Reading from the N-terminus, the 223-residue chain is Sporulation-specific protein 19 (223 aa).

The N-terminal stretch at 1 to 20 (MKKQILIVAAQSILCSTVFG) is a signal peptide. Residue N198 is the site of GPI-anchor amidated asparagine attachment. A propeptide spans 199–223 (ASNFLTPTTVALAVLLTILLFIQAY) (removed in mature form).

The GPI-anchor is attached to the protein in the endoplasmic reticulum and serves to target the protein to the cell surface. There, the glucosamine-inositol phospholipid moiety is cleaved off and the GPI-modified mannoprotein is covalently attached via its lipidless GPI glycan remnant to the 1,6-beta-glucan of the outer cell wall layer.

It is found in the secreted. It localises to the cell wall. The protein localises to the membrane. Its function is as follows. Involved in sporulation. Essential for completion of the nuclear division. This is Sporulation-specific protein 19 (SPO19) from Saccharomyces cerevisiae (strain ATCC 204508 / S288c) (Baker's yeast).